Reading from the N-terminus, the 384-residue chain is MTNPIIAFQNVSKVFEDSGTQVLKDINFELEEGKFYTLLGASGSGKSTILNIIAGLLDATSGDVLLDGKRINDIPINKRDVHTVFQSYALFPHMNVFDNVAFALKLKKVPKKEIEERVKEALKMVQLDGYQKRSIQKLSGGQRQRVAIARAIINQPRVVLLDEPLSALDLKLRTEMQYELRELQKRLGITFVFVTHDQEEALAMSDWIFVMNDGEIVQSGTPVDIYDEPINHFVATFIGESNILPGVMIEDYLVEFNGKRFESVDGGMRPNEPVEVVIRPEDLQITLPEEGKLQVRVETQLFRGVHYEIIAYDNLGNEWMIHSTRKAIEGEIIGLDFMPEDIHIMRLNETEEEFDARIEEYVEMEEPEDGLIHAIEEERHEENS.

The region spanning 6–238 (IAFQNVSKVF…PINHFVATFI (233 aa)) is the ABC transporter domain. Residue 40–47 (GASGSGKS) participates in ATP binding.

The protein belongs to the ABC transporter superfamily. Spermidine/putrescine importer (TC 3.A.1.11.1) family. The complex is composed of two ATP-binding proteins (PotA), two transmembrane proteins (PotB and PotC) and a solute-binding protein (PotD).

It localises to the cell membrane. The enzyme catalyses ATP + H2O + polyamine-[polyamine-binding protein]Side 1 = ADP + phosphate + polyamineSide 2 + [polyamine-binding protein]Side 1.. In terms of biological role, part of the ABC transporter complex PotABCD involved in spermidine/putrescine import. Responsible for energy coupling to the transport system. The chain is Spermidine/putrescine import ATP-binding protein PotA from Streptococcus thermophilus (strain ATCC BAA-250 / LMG 18311).